We begin with the raw amino-acid sequence, 361 residues long: Velvet complex subunit B (361 aa).

Disordered regions lie at residues 1–36 (MYAVEDRHHPVPPPLSMDRISAPSVQYPSGTTSLRQ) and 308–340 (NGAPVIEPHQSWPRFSLNPSRSSPPKSSPVLLR). The segment covering 23–35 (PSVQYPSGTTSLR) has biased composition (polar residues). In terms of domain architecture, Velvet spans 47-353 (QDGRSWSLQV…SASALRYRVS (307 aa)). A compositionally biased stretch (low complexity) spans 323-336 (SLNPSRSSPPKSSP).

Belongs to the velvet family. VelB subfamily. In terms of assembly, component of the heterotrimeric velvet complex composed of laeA, veA and velB; VeA acting as a bridging protein between laeA and velB. Interacts with velA. Forms a heterodimeric complex with vosA; the formation of the velB-vosA complex is light-dependent. Interacts with vosA.

It localises to the nucleus. Its subcellular location is the cytoplasm. Component of the velvet transcription factor complex that controls sexual/asexual developmental ratio in response to light, promoting sexual development in the darkness while stimulating asexual sporulation under illumination. The velvet complex acts as a global regulator for secondary metabolite gene expression. Component of the velB-VosA heterodimeric complex that plays a dual role in activating genes associated with spore maturation and repressing certain development-associated genes. The velB-VosA complex binds DNA through the DNA-binding domain of vosA that recognizes an 11-nucleotide consensus sequence 5'-CTGGCCGCGGC-3' consisting of two motifs in the promoters of key developmental regulatory genes. Controls conidiophore formation. The sequence is that of Velvet complex subunit B from Penicillium rubens (strain ATCC 28089 / DSM 1075 / NRRL 1951 / Wisconsin 54-1255) (Penicillium chrysogenum).